We begin with the raw amino-acid sequence, 138 residues long: Large ribosomal subunit protein bL19 (138 aa).

It belongs to the bacterial ribosomal protein bL19 family.

In terms of biological role, this protein is located at the 30S-50S ribosomal subunit interface and may play a role in the structure and function of the aminoacyl-tRNA binding site. The protein is Large ribosomal subunit protein bL19 of Rickettsia conorii (strain ATCC VR-613 / Malish 7).